A 605-amino-acid chain; its full sequence is Meiosis-specific protein HOP1 (605 aa).

An HORMA domain is found at 20–250 (EQSQKLLQTM…TKHHKVALSV (231 aa)). A zinc finger spans residues 348–364 (CKSCRKTLHGICYGNFL).

Its subcellular location is the nucleus. It localises to the chromosome. Probable constituent of the synaptonemal complex during meiosis. May interact with RED1. The protein is Meiosis-specific protein HOP1 (HOP1) of Saccharomyces cerevisiae (strain ATCC 204508 / S288c) (Baker's yeast).